Consider the following 1423-residue polypeptide: Protein phosphatase Slingshot homolog 2 (1423 aa).

Positions 1-37 are disordered; the sequence is MALVTVQRSPTPSTTSSPCASEADSGEEECRSQPRSI. Low complexity predominate over residues 9-18; that stretch reads SPTPSTTSSP. Phosphoserine occurs at positions 17, 25, and 36. Residues 248–303 enclose the DEK-C domain; sequence ERTERLIKTKLREIMMQKDLENITSKEIRTELEMQMVCNLREFKEFIDNEMIVILG. A Tyrosine-protein phosphatase domain is found at 307–448; sequence SPTQIFEHVF…LEEYQGILLA (142 aa). The active-site Phosphocysteine intermediate is the C392. Residues S461, S487, S534, S631, and S633 each carry the phosphoserine modification. Disordered stretches follow at residues 617–641, 664–684, 696–728, 797–825, 840–862, 877–954, 962–981, 1019–1041, 1070–1108, and 1144–1179; these read TSPL…CQTE, QETR…GGRN, PSKV…QSKA, ENKP…MCNP, EGEP…AKWY, LRQE…NATV, FDHL…TQQE, TSPN…EQGL, SLHP…SSLS, and TEQS…YKDS. Over residues 621–635 the composition is skewed to pro residues; the sequence is KDPPMSPDPESPSPQ. A compositionally biased stretch (basic and acidic residues) spans 664–680; it reads QETRSRSFSHSRMEELG. Polar residues predominate over residues 889 to 904; sequence TCTSLSTRKNSKNDSS. The segment covering 910–932 has biased composition (basic and acidic residues); the sequence is PKGKSDEAPPEHSFVLKEPEMSK. A compositionally biased stretch (polar residues) spans 941–953; sequence EAGSLSHSEQNAT. A compositionally biased stretch (polar residues) spans 1019–1034; that stretch reads TSPNHTGPGSEIATSE. Over residues 1144 to 1172 the composition is skewed to polar residues; it reads TEQSSTTDEPSAEQVSWEESQESPLSSGS. Residue S1217 is modified to Phosphoserine. The residue at position 1422 (T1422) is a Phosphothreonine.

Belongs to the protein-tyrosine phosphatase family. In terms of assembly, interacts with filamentous actin.

The protein localises to the cytoplasm. The protein resides in the cytoskeleton. It localises to the cell junction. It is found in the focal adhesion. Its subcellular location is the cytoplasmic vesicle. The protein localises to the secretory vesicle. The protein resides in the acrosome. The enzyme catalyses O-phospho-L-tyrosyl-[protein] + H2O = L-tyrosyl-[protein] + phosphate. The catalysed reaction is O-phospho-L-seryl-[protein] + H2O = L-seryl-[protein] + phosphate. It carries out the reaction O-phospho-L-threonyl-[protein] + H2O = L-threonyl-[protein] + phosphate. In terms of biological role, protein phosphatase which regulates actin filament dynamics. Dephosphorylates and activates the actin binding/depolymerizing factor cofilin, which subsequently binds to actin filaments and stimulates their disassembly. Inhibitory phosphorylation of cofilin is mediated by LIMK1, which may also be dephosphorylated and inactivated by this protein. Required for spermatogenesis. Involved in acrosome biogenesis, probably by regulating cofilin-mediated actin cytoskeleton remodeling during proacrosomal vesicle fusion and/or Golgi to perinuclear vesicle trafficking. The chain is Protein phosphatase Slingshot homolog 2 (SSH2) from Homo sapiens (Human).